Consider the following 475-residue polypeptide: Ribulose bisphosphate carboxylase large chain (475 aa).

The propeptide occupies 1 to 2 (MS). P3 carries the N-acetylproline modification. K14 bears the N6,N6,N6-trimethyllysine mark. Substrate is bound by residues N123 and T173. The active-site Proton acceptor is the K175. K177 is a binding site for substrate. Positions 201, 203, and 204 each coordinate Mg(2+). K201 is subject to N6-carboxylysine. Catalysis depends on H294, which acts as the Proton acceptor. The substrate site is built by R295, H327, and S379.

The protein belongs to the RuBisCO large chain family. Type I subfamily. Heterohexadecamer of 8 large chains and 8 small chains; disulfide-linked. The disulfide link is formed within the large subunit homodimers. Requires Mg(2+) as cofactor. In terms of processing, the disulfide bond which can form in the large chain dimeric partners within the hexadecamer appears to be associated with oxidative stress and protein turnover.

Its subcellular location is the plastid. It is found in the chloroplast. The catalysed reaction is 2 (2R)-3-phosphoglycerate + 2 H(+) = D-ribulose 1,5-bisphosphate + CO2 + H2O. The enzyme catalyses D-ribulose 1,5-bisphosphate + O2 = 2-phosphoglycolate + (2R)-3-phosphoglycerate + 2 H(+). RuBisCO catalyzes two reactions: the carboxylation of D-ribulose 1,5-bisphosphate, the primary event in carbon dioxide fixation, as well as the oxidative fragmentation of the pentose substrate in the photorespiration process. Both reactions occur simultaneously and in competition at the same active site. The sequence is that of Ribulose bisphosphate carboxylase large chain from Liquidambar styraciflua (Sweetgum tree).